Consider the following 314-residue polypeptide: 4-hydroxy-3-methylbut-2-enyl diphosphate reductase (314 aa).

A [4Fe-4S] cluster-binding site is contributed by C12. Residues H41 and H74 each coordinate (2E)-4-hydroxy-3-methylbut-2-enyl diphosphate. Dimethylallyl diphosphate is bound by residues H41 and H74. Positions 41 and 74 each coordinate isopentenyl diphosphate. [4Fe-4S] cluster is bound at residue C96. H124 contributes to the (2E)-4-hydroxy-3-methylbut-2-enyl diphosphate binding site. A dimethylallyl diphosphate-binding site is contributed by H124. H124 is a binding site for isopentenyl diphosphate. The Proton donor role is filled by E126. T167 contacts (2E)-4-hydroxy-3-methylbut-2-enyl diphosphate. C197 serves as a coordination point for [4Fe-4S] cluster. Positions 225, 226, 227, and 269 each coordinate (2E)-4-hydroxy-3-methylbut-2-enyl diphosphate. Residues S225, S226, N227, and S269 each contribute to the dimethylallyl diphosphate site. The isopentenyl diphosphate site is built by S225, S226, N227, and S269.

It belongs to the IspH family. It depends on [4Fe-4S] cluster as a cofactor.

The catalysed reaction is isopentenyl diphosphate + 2 oxidized [2Fe-2S]-[ferredoxin] + H2O = (2E)-4-hydroxy-3-methylbut-2-enyl diphosphate + 2 reduced [2Fe-2S]-[ferredoxin] + 2 H(+). It carries out the reaction dimethylallyl diphosphate + 2 oxidized [2Fe-2S]-[ferredoxin] + H2O = (2E)-4-hydroxy-3-methylbut-2-enyl diphosphate + 2 reduced [2Fe-2S]-[ferredoxin] + 2 H(+). The protein operates within isoprenoid biosynthesis; dimethylallyl diphosphate biosynthesis; dimethylallyl diphosphate from (2E)-4-hydroxy-3-methylbutenyl diphosphate: step 1/1. It participates in isoprenoid biosynthesis; isopentenyl diphosphate biosynthesis via DXP pathway; isopentenyl diphosphate from 1-deoxy-D-xylulose 5-phosphate: step 6/6. Catalyzes the conversion of 1-hydroxy-2-methyl-2-(E)-butenyl 4-diphosphate (HMBPP) into a mixture of isopentenyl diphosphate (IPP) and dimethylallyl diphosphate (DMAPP). Acts in the terminal step of the DOXP/MEP pathway for isoprenoid precursor biosynthesis. In Mannheimia succiniciproducens (strain KCTC 0769BP / MBEL55E), this protein is 4-hydroxy-3-methylbut-2-enyl diphosphate reductase.